We begin with the raw amino-acid sequence, 523 residues long: Anthranilate synthase component 1 (523 aa).

L-tryptophan is bound by residues serine 45 and 296–298; that span reads PYM. 333–334 contacts chorismate; it reads GT. Glutamate 366 provides a ligand contact to Mg(2+). Chorismate-binding positions include tyrosine 454, arginine 474, 488–490, and glycine 490; that span reads GAG. A Mg(2+)-binding site is contributed by glutamate 503.

It belongs to the anthranilate synthase component I family. In terms of assembly, heterotetramer consisting of two non-identical subunits: a beta subunit (TrpG) and a large alpha subunit (TrpE). Requires Mg(2+) as cofactor.

It catalyses the reaction chorismate + L-glutamine = anthranilate + pyruvate + L-glutamate + H(+). Its pathway is amino-acid biosynthesis; L-tryptophan biosynthesis; L-tryptophan from chorismate: step 1/5. Feedback inhibited by tryptophan. Functionally, part of a heterotetrameric complex that catalyzes the two-step biosynthesis of anthranilate, an intermediate in the biosynthesis of L-tryptophan. In the first step, the glutamine-binding beta subunit (TrpG) of anthranilate synthase (AS) provides the glutamine amidotransferase activity which generates ammonia as a substrate that, along with chorismate, is used in the second step, catalyzed by the large alpha subunit of AS (TrpE) to produce anthranilate. In the absence of TrpG, TrpE can synthesize anthranilate directly from chorismate and high concentrations of ammonia. This chain is Anthranilate synthase component 1 (trpE), found in Vibrio cholerae serotype O1 (strain ATCC 39315 / El Tor Inaba N16961).